The chain runs to 93 residues: Small ribosomal subunit protein uS17 (93 aa).

This sequence belongs to the universal ribosomal protein uS17 family. In terms of assembly, part of the 30S ribosomal subunit.

Its function is as follows. One of the primary rRNA binding proteins, it binds specifically to the 5'-end of 16S ribosomal RNA. The sequence is that of Small ribosomal subunit protein uS17 from Bordetella avium (strain 197N).